The chain runs to 523 residues: Tryptamine 5-hydroxylase (523 aa).

A helical membrane pass occupies residues 5 to 25 (MASTMSLALLVLSAAYVLVAL). Cysteine 453 is a heme binding site.

It belongs to the cytochrome P450 family. Requires heme as cofactor.

It localises to the endoplasmic reticulum membrane. It carries out the reaction tryptamine + reduced [NADPH--hemoprotein reductase] + O2 = serotonin + oxidized [NADPH--hemoprotein reductase] + H2O + H(+). In terms of biological role, involved in serotonin biosynthesis. Catalyzes the conversion of tryptamine to serotonin. Accumulation of serotonin may play a role in innate immunity. This is Tryptamine 5-hydroxylase from Oryza sativa subsp. japonica (Rice).